Reading from the N-terminus, the 353-residue chain is Protein RecA (353 aa).

G74–T81 contributes to the ATP binding site.

This sequence belongs to the RecA family.

The protein resides in the cytoplasm. In terms of biological role, can catalyze the hydrolysis of ATP in the presence of single-stranded DNA, the ATP-dependent uptake of single-stranded DNA by duplex DNA, and the ATP-dependent hybridization of homologous single-stranded DNAs. It interacts with LexA causing its activation and leading to its autocatalytic cleavage. This is Protein RecA from Bordetella bronchiseptica (strain ATCC BAA-588 / NCTC 13252 / RB50) (Alcaligenes bronchisepticus).